The primary structure comprises 239 residues: Phosducin-like protein 2 (239 aa).

The stretch at 26–87 (TEDELFDLIK…IQQMKVEAEL (62 aa)) forms a coiled coil. The 161-residue stretch at 36 to 196 (EAAEMATEAE…TTVNDIEWQL (161 aa)) folds into the Phosducin domain. The segment covering 42–59 (TEAEKNEKLENASLKDLK) has biased composition (basic and acidic residues). Disordered regions lie at residues 42–64 (TEAE…MEDD) and 212–239 (ITLA…DSDD). The tract at residues 90–239 (FGELKEISEP…DESDNSDSDD (150 aa)) is thioredoxin fold. Positions 214-224 (LARKKSQKSRY) are enriched in basic residues. Over residues 230–239 (DESDNSDSDD) the composition is skewed to acidic residues.

It belongs to the phosducin family.

This Dictyostelium discoideum (Social amoeba) protein is Phosducin-like protein 2 (phlp2).